A 250-amino-acid chain; its full sequence is DNA repair protein RecO (250 aa).

This sequence belongs to the RecO family.

Functionally, involved in DNA repair and RecF pathway recombination. The protein is DNA repair protein RecO of Thermodesulfovibrio yellowstonii (strain ATCC 51303 / DSM 11347 / YP87).